The sequence spans 63 residues: Large ribosomal subunit protein uL29 (63 aa).

It belongs to the universal ribosomal protein uL29 family.

The chain is Large ribosomal subunit protein uL29 from Pectobacterium atrosepticum (strain SCRI 1043 / ATCC BAA-672) (Erwinia carotovora subsp. atroseptica).